A 107-amino-acid polypeptide reads, in one-letter code: Early E3A 12.5 kDa protein (107 aa).

The protein belongs to the adenoviridae E3A-2 family.

Its function is as follows. Not yet known. This chain is Early E3A 12.5 kDa protein, found in Human adenovirus C serotype 5 (HAdV-5).